The chain runs to 684 residues: DNA ligase (684 aa).

NAD(+)-binding positions include 34 to 38 (DFQYD), 83 to 84 (SL), and E117. The active-site N6-AMP-lysine intermediate is K119. R140, E186, K300, and K324 together coordinate NAD(+). Zn(2+) is bound by residues C418, C421, C436, and C442. In terms of domain architecture, BRCT spans 601–684 (PVNLNFDGMK…EMLGEVGSNE (84 aa)).

It belongs to the NAD-dependent DNA ligase family. LigA subfamily. Mg(2+) serves as cofactor. Mn(2+) is required as a cofactor.

The enzyme catalyses NAD(+) + (deoxyribonucleotide)n-3'-hydroxyl + 5'-phospho-(deoxyribonucleotide)m = (deoxyribonucleotide)n+m + AMP + beta-nicotinamide D-nucleotide.. Functionally, DNA ligase that catalyzes the formation of phosphodiester linkages between 5'-phosphoryl and 3'-hydroxyl groups in double-stranded DNA using NAD as a coenzyme and as the energy source for the reaction. It is essential for DNA replication and repair of damaged DNA. This Chlorobium phaeobacteroides (strain BS1) protein is DNA ligase.